We begin with the raw amino-acid sequence, 267 residues long: V-type proton ATPase subunit D (267 aa).

It belongs to the V-ATPase D subunit family. In terms of assembly, V-ATPase is a heteromultimeric enzyme composed of a peripheral catalytic V1 complex (components A to H) attached to an integral membrane V0 proton pore complex (components: a, c, c', c'', d, e, f and VOA1).

The protein localises to the vacuole membrane. Subunit of the V1 complex of vacuolar(H+)-ATPase (V-ATPase), a multisubunit enzyme composed of a peripheral complex (V1) that hydrolyzes ATP and a membrane integral complex (V0) that translocates protons. V-ATPase is responsible for acidifying and maintaining the pH of intracellular compartments. This Candida albicans (strain SC5314 / ATCC MYA-2876) (Yeast) protein is V-type proton ATPase subunit D (VMA8).